The sequence spans 205 residues: ATP phosphoribosyltransferase (205 aa).

It belongs to the ATP phosphoribosyltransferase family. Short subfamily. In terms of assembly, heteromultimer composed of HisG and HisZ subunits.

It localises to the cytoplasm. The catalysed reaction is 1-(5-phospho-beta-D-ribosyl)-ATP + diphosphate = 5-phospho-alpha-D-ribose 1-diphosphate + ATP. Its pathway is amino-acid biosynthesis; L-histidine biosynthesis; L-histidine from 5-phospho-alpha-D-ribose 1-diphosphate: step 1/9. Functionally, catalyzes the condensation of ATP and 5-phosphoribose 1-diphosphate to form N'-(5'-phosphoribosyl)-ATP (PR-ATP). Has a crucial role in the pathway because the rate of histidine biosynthesis seems to be controlled primarily by regulation of HisG enzymatic activity. This is ATP phosphoribosyltransferase from Nitratiruptor sp. (strain SB155-2).